The following is a 277-amino-acid chain: Probable endonuclease 4 (277 aa).

The Zn(2+) site is built by His67, His107, Glu141, Asp173, His176, His207, Asp220, His222, and Glu252.

It belongs to the AP endonuclease 2 family. It depends on Zn(2+) as a cofactor.

The enzyme catalyses Endonucleolytic cleavage to 5'-phosphooligonucleotide end-products.. In terms of biological role, endonuclease IV plays a role in DNA repair. It cleaves phosphodiester bonds at apurinic or apyrimidinic (AP) sites, generating a 3'-hydroxyl group and a 5'-terminal sugar phosphate. The polypeptide is Probable endonuclease 4 (Finegoldia magna (strain ATCC 29328 / DSM 20472 / WAL 2508) (Peptostreptococcus magnus)).